Reading from the N-terminus, the 1030-residue chain is uncharacterized protein (1030 aa).

The SWIM-type zinc-finger motif lies at 51 to 86; that stretch reads IKVSFTAKDGELTCKCSCLANVDNCVHIVAVLLKYH. A Helicase ATP-binding domain is found at 590–751; sequence RGLEENKFGG…WSCFDFVLPS (162 aa). 603 to 610 lines the ATP pocket; it reads DEMGLGKT. The DEAQ box signature appears at 702–705; that stretch reads DEAQ. The region spanning 867–1021 is the Helicase C-terminal domain; the sequence is ALEIIHEAIE…EDVNFFESLT (155 aa).

It belongs to the SNF2/RAD54 helicase family.

This is an uncharacterized protein from Mycoplasma pneumoniae (strain ATCC 29342 / M129 / Subtype 1) (Mycoplasmoides pneumoniae).